The following is a 361-amino-acid chain: tRNA pseudouridine synthase D (361 aa).

Asp76 acts as the Nucleophile in catalysis. Positions 151 to 318 (GIPNYFGYQR…EQGSRRLAWI (168 aa)) constitute a TRUD domain.

This sequence belongs to the pseudouridine synthase TruD family.

The enzyme catalyses uridine(13) in tRNA = pseudouridine(13) in tRNA. Functionally, responsible for synthesis of pseudouridine from uracil-13 in transfer RNAs. The sequence is that of tRNA pseudouridine synthase D from Wolinella succinogenes (strain ATCC 29543 / DSM 1740 / CCUG 13145 / JCM 31913 / LMG 7466 / NCTC 11488 / FDC 602W) (Vibrio succinogenes).